The sequence spans 127 residues: Large ribosomal subunit protein bL20 (127 aa).

The protein belongs to the bacterial ribosomal protein bL20 family.

Its function is as follows. Binds directly to 23S ribosomal RNA and is necessary for the in vitro assembly process of the 50S ribosomal subunit. It is not involved in the protein synthesizing functions of that subunit. This chain is Large ribosomal subunit protein bL20, found in Akkermansia muciniphila (strain ATCC BAA-835 / DSM 22959 / JCM 33894 / BCRC 81048 / CCUG 64013 / CIP 107961 / Muc).